The sequence spans 463 residues: V-type proton ATPase subunit S1 (463 aa).

The first 32 residues, 1 to 32 (MMAATVVSRIRTGTGRAPVMWLSLSLVAVAAA), serve as a signal peptide directing secretion. The propeptide occupies 33–225 (VATEQQVPLV…TAVRPSRVAR (193 aa)). Residues 33–412 (VATEQQVPLV…EQFSYASDCA (380 aa)) are Lumenal-facing. 8 N-linked (GlcNAc...) asparagine glycosylation sites follow: Asn164, Asn255, Asn267, Asn290, Asn297, Asn344, Asn351, and Asn399. Cys365 and Cys411 form a disulfide bridge. Residues 413–433 (GFFSPGIWMGLLTTLFMLFIF) form a helical membrane-spanning segment. Residues 434–463 (TYGLHMILSLKTMDRFDDHKGPTITLTQIV) are Cytoplasmic-facing.

The protein belongs to the vacuolar ATPase subunit S1 family. In terms of assembly, accessory component of the multisubunit proton-transporting vacuolar (V)-ATPase protein pump. Interacts (via N-terminus) with ATP6AP2 (via N-terminus). Interacts with RNASEK. Interacts with TMEM106B (via C-terminus). Post-translationally, N-glycosylated. In terms of tissue distribution, expressed in brain cortex (at protein level). Highly expressed in islets of Langerhans. Expressed in pancreatic acini, pituitary gland, adrenal gland, lung, brain and bone marrow.

It localises to the endoplasmic reticulum membrane. The protein localises to the endoplasmic reticulum-Golgi intermediate compartment membrane. The protein resides in the cytoplasmic vesicle. Its subcellular location is the secretory vesicle. It is found in the synaptic vesicle membrane. It localises to the clathrin-coated vesicle membrane. Functionally, accessory subunit of the proton-transporting vacuolar (V)-ATPase protein pump, which is required for luminal acidification of secretory vesicles. Guides the V-type ATPase into specialized subcellular compartments, such as neuroendocrine regulated secretory vesicles or the ruffled border of the osteoclast, thereby regulating its activity. Involved in membrane trafficking and Ca(2+)-dependent membrane fusion. May play a role in the assembly of the V-type ATPase complex. In aerobic conditions, involved in intracellular iron homeostasis, thus triggering the activity of Fe(2+) prolyl hydroxylase (PHD) enzymes, and leading to HIF1A hydroxylation and subsequent proteasomal degradation. In islets of Langerhans cells, may regulate the acidification of dense-core secretory granules. This Mus musculus (Mouse) protein is V-type proton ATPase subunit S1 (Atp6ap1).